The following is a 209-amino-acid chain: Peptidyl-tRNA hydrolase (209 aa).

Tyr-14 provides a ligand contact to tRNA. His-19 (proton acceptor) is an active-site residue. TRNA-binding residues include Tyr-68, Asn-70, and Asn-116.

It belongs to the PTH family. As to quaternary structure, monomer.

It localises to the cytoplasm. It catalyses the reaction an N-acyl-L-alpha-aminoacyl-tRNA + H2O = an N-acyl-L-amino acid + a tRNA + H(+). In terms of biological role, hydrolyzes ribosome-free peptidyl-tRNAs (with 1 or more amino acids incorporated), which drop off the ribosome during protein synthesis, or as a result of ribosome stalling. Catalyzes the release of premature peptidyl moieties from peptidyl-tRNA molecules trapped in stalled 50S ribosomal subunits, and thus maintains levels of free tRNAs and 50S ribosomes. The sequence is that of Peptidyl-tRNA hydrolase from Phenylobacterium zucineum (strain HLK1).